The chain runs to 348 residues: Protein RecA (348 aa).

67–74 (GPESSGKT) contacts ATP.

The protein belongs to the RecA family.

The protein resides in the cytoplasm. Its function is as follows. Can catalyze the hydrolysis of ATP in the presence of single-stranded DNA, the ATP-dependent uptake of single-stranded DNA by duplex DNA, and the ATP-dependent hybridization of homologous single-stranded DNAs. It interacts with LexA causing its activation and leading to its autocatalytic cleavage. The sequence is that of Protein RecA from Salinispora tropica (strain ATCC BAA-916 / DSM 44818 / JCM 13857 / NBRC 105044 / CNB-440).